Reading from the N-terminus, the 612-residue chain is MRRIYAAWTLVAAAGVMDCSPRLEKAAAFTLGPDSQVIVFPFMFQGYNIVVLPTTKYGDLKGNARRRVASFLEHNISHAVWYFVVGGIAYKDDRSERLFSEMMDGYLKKISAGASKVYKGGRKMFSESLETVHEMIFECNKAGDGHVVKYGKSIINRLSDMIENAPTGISAEEKREYRRFWSRVKERAGFLYSTERLRRVVEVEKIVCNACKEICLKLKEEELMGLLAEGKMKKDLKATVDEDEIGHCLYLEYTVVNTSLLLDAHREHGGDVTRELVKQMLLGKKGDEIDRRYINKVANVVKERQRREMEKKEEEKKKEEEKKKEEEKRKEEKKKKKEEKKEEKKKKKEEKKEEKKEEKKEEKKEEKKEEKKEEKKEEKSGKSLREGEASEEAEMPSVEVGGARRKTGKKSEGGRKRYKIHRRVSRWRKSPEKIKEEWDKGSEEKWRGRSLEEIKEQKVFHDIMGVLELLRSEDADKFFIDTGDYTKGGSERQRMVAIGVLESGGKRMAGVVEVGTFKDSSSGCPVVYHLMFRVTGIEGMGDVMSPEFAEANDIEKIDKNREYQDEGMFVYPRGVRFETVKETDAFQIVWGNPSNTSKVLRRLTIQRRPYVI.

Positions 304–330 (RQRREMEKKEEEKKKEEEKKKEEEKRK) are enriched in basic and acidic residues. The disordered stretch occupies residues 304 to 424 (RQRREMEKKE…RKRYKIHRRV (121 aa)). The segment covering 331-349 (EEKKKKKEEKKEEKKKKKE) has biased composition (basic residues). A compositionally biased stretch (basic and acidic residues) spans 350-388 (EKKEEKKEEKKEEKKEEKKEEKKEEKKEEKSGKSLREGE).

This sequence belongs to the UPF0329 family.

This chain is UPF0329 protein ECU05_1680/ECU11_0050, found in Encephalitozoon cuniculi (strain GB-M1) (Microsporidian parasite).